The chain runs to 69 residues: MSHDIATEEADDGALDRCVLCDLTGKRVDVKEATCTGRPATTFEQAFAVERDAGFDDFLHGPVGPRSTP.

This is an uncharacterized protein from Mycobacterium bovis (strain ATCC BAA-935 / AF2122/97).